We begin with the raw amino-acid sequence, 1021 residues long: Sodium/potassium-transporting ATPase subunit alpha-1 (1021 aa).

The propeptide occupies 1 to 5 (MGKGA). Basic and acidic residues predominate over residues 1–11 (MGKGAGRDKYE). The tract at residues 1–31 (MGKGAGRDKYEPTATSEHGTKKKKAKERDMD) is disordered. The Cytoplasmic segment spans residues 6–85 (GRDKYEPTAT…NTLTPPPTTP (80 aa)). Y10 is modified (phosphotyrosine). Position 16 is a phosphoserine; by PKC (S16). Residues 80 to 82 (PPP) form a phosphoinositide-3 kinase binding region. A helical transmembrane segment spans residues 86 to 106 (EWVKFCRQLFGGFSLLLWIGS). At 107–129 (LLCFLAYGITSVMEGEPNSDNLY) the chain is on the extracellular side. Residues 130 to 150 (LGVVLAAVVIITGCFSYYQEA) form a helical membrane-spanning segment. Topologically, residues 151 to 286 (KSSKIMESFK…GGKTPIAMEI (136 aa)) are cytoplasmic. The segment at 214–233 (SSLTGESEPQTRSPDFSNEN) is disordered. The chain crosses the membrane as a helical span at residues 287–306 (EHFIHLITGVAVFLGVSFFI). The Extracellular portion of the chain corresponds to 307–318 (LSLILEYTWLEA). Residues 319 to 336 (VIFLIGIIVANVPEGLLA) traverse the membrane as a helical segment. Residues 337-770 (TVTVCLTLTA…EEGRLIFDNL (434 aa)) are Cytoplasmic-facing. D374 acts as the 4-aspartylphosphate intermediate in catalysis. K485 contributes to the ATP binding site. Positions 715 and 719 each coordinate Mg(2+). A helical transmembrane segment spans residues 771–790 (KKSIAYTLTSNIPEITPFLI). At 791 to 800 (FIIANIPLPL) the chain is on the extracellular side. Residues 801 to 821 (GTCTILCIDLGTDMVPAISLA) form a helical membrane-spanning segment. Residues 822–841 (YEQAESDIMKRQPRNPKTDK) lie on the Cytoplasmic side of the membrane. A helical membrane pass occupies residues 842 to 864 (LVNERLISMAYGQIGMIQALGGF). Over 865-916 (FTYFVIMAENGFLPSGLVGIRLQWDDRWINDVEDSYGQQWTFEQRKIVEFTC) the chain is Extracellular. The chain crosses the membrane as a helical span at residues 917-936 (HTAFFVSIVVVQWADLIICK). At 937–949 (TRRNSVFQQGMKN) the chain is on the cytoplasmic side. S941 carries the post-translational modification Phosphoserine; by PKA. The helical transmembrane segment at 950-968 (KILIFGLFEETALAAFLSY) threads the bilayer. Residues 969-983 (CPGMDVALRMYPLKP) lie on the Extracellular side of the membrane. The chain crosses the membrane as a helical span at residues 984–1004 (TWWFCAFPYSLLIFLYDEIRK). Over 1005-1021 (LIIRRNPGGWVERETYY) the chain is Cytoplasmic.

It belongs to the cation transport ATPase (P-type) (TC 3.A.3) family. Type IIC subfamily. The sodium/potassium-transporting ATPase is composed of a catalytic alpha subunit, an auxiliary non-catalytic beta subunit and an additional regulatory subunit. Post-translationally, phosphorylation on Tyr-10 modulates pumping activity.

It is found in the cell membrane. The protein resides in the sarcolemma. It carries out the reaction K(+)(out) + Na(+)(in) + ATP + H2O = K(+)(in) + Na(+)(out) + ADP + phosphate + H(+). Functionally, this is the catalytic component of the active enzyme, which catalyzes the hydrolysis of ATP coupled with the exchange of sodium and potassium ions across the plasma membrane. This action creates the electrochemical gradient of sodium and potassium ions, providing the energy for active transport of various nutrients. The polypeptide is Sodium/potassium-transporting ATPase subunit alpha-1 (ATP1A1) (Gallus gallus (Chicken)).